The chain runs to 213 residues: Tellurium resistance protein TerX (213 aa).

This sequence belongs to the CAPAB/TerDEXZ family.

In terms of biological role, not known; seems to contribute to the tellurium resistance (Ter) mechanism. Also involved in phage inhibition (Phi) and colicin resistance (PacB). This is Tellurium resistance protein TerX (terX) from Serratia marcescens.